We begin with the raw amino-acid sequence, 217 residues long: Endo-1,4-beta-xylanase (217 aa).

Positions 1–17 are cleaved as a signal peptide; sequence MQFLIPVVILCVSLVDS. Residues 20–217 enclose the GH11 domain; the sequence is VLYNNEIGFN…SSGFADITVS (198 aa). N56 and N80 each carry an N-linked (GlcNAc...) asparagine glycan. The Nucleophile role is filled by E107. The active-site Proton donor is E204.

It belongs to the glycosyl hydrolase 11 (cellulase G) family. As to expression, expressed in larval carcasses and gut, and adult gut.

The protein localises to the secreted. It catalyses the reaction Endohydrolysis of (1-&gt;4)-beta-D-xylosidic linkages in xylans.. Its pathway is glycan degradation; xylan degradation. This is Endo-1,4-beta-xylanase from Phaedon cochleariae (Mustard beetle).